The chain runs to 414 residues: MSKKISGGSVVEMQGDEMTRIIWELIKEKLIFPYVELDLHSYDLGIENRDATNDQVTKDAAEAIKKHNVGVKCATITPDEKRVEEFKLKQMWKSPNGTIRNILGGTVFREAIICKNIPRLVSGWVKPIIIGRHAYGDQYRATDFVVPGPGKVEITYTPSDGTQKVTYLVHNFEEGGGVAMGMYNQDKSIEDFAHSSFQMALSKGWPLYLSTKNTILKKYDGRFKDIFQEIYDKQYKSQFEAQKIWYEHRLIDDMVAQAMKSEGGFIWACKNYDGDVQSDSVAQGYGSLGMMTSVLVCPDGKTVEAEAAHGTVTRHYRMYQKGQETSTNPIASIFAWTRGLAHRAKLDNNKELAFFANALEEVSIETIEAGFMTKDLAACIKGLPNVQRSDYLNTFEFMDKLGENLKIKLAQAKL.

An N-acetylserine modification is found at Ser-2. At Tyr-42 the chain carries Phosphotyrosine. 75–77 is an NADP(+) binding site; that stretch reads TIT. Thr-77 is a binding site for substrate. An N6-acetyllysine modification is found at Lys-81. Arg-82 serves as a coordination point for NADP(+). Substrate contacts are provided by residues 94–100 and Arg-109; that span reads SPNGTIR. Position 126 is an N6-succinyllysine (Lys-126). The substrate site is built by Arg-132 and Lys-212. N6-acetyllysine occurs at positions 224, 233, and 243. Asp-252 contributes to the Mn(2+) binding site. Lys-260 provides a ligand contact to NADP(+). Positions 275 and 279 each coordinate Mn(2+). 310–315 is a binding site for NADP(+); it reads GTVTRH. At Lys-321 the chain carries N6-acetyllysine. Position 328 (Asn-328) interacts with NADP(+). Ser-389 carries the phosphoserine modification. Lys-400 bears the N6-succinyllysine mark.

Belongs to the isocitrate and isopropylmalate dehydrogenases family. In terms of assembly, homodimer. The cofactor is Mg(2+). It depends on Mn(2+) as a cofactor. In terms of processing, acetylation at Lys-374 dramatically reduces catalytic activity.

It is found in the cytoplasm. It localises to the cytosol. The protein resides in the peroxisome. The catalysed reaction is D-threo-isocitrate + NADP(+) = 2-oxoglutarate + CO2 + NADPH. Catalyzes the NADP(+)-dependent oxidative decarboxylation of isocitrate (D-threo-isocitrate) to 2-ketoglutarate (2-oxoglutarate), which is required by other enzymes such as the phytanoyl-CoA dioxygenase. Plays a critical role in the generation of NADPH, an important cofactor in many biosynthesis pathways. May act as a corneal epithelial crystallin and may be involved in maintaining corneal epithelial transparency. The polypeptide is Isocitrate dehydrogenase [NADP] cytoplasmic (IDH1) (Homo sapiens (Human)).